The primary structure comprises 434 residues: Protein FAM83A (434 aa).

The segment at 1–298 (MSRSRHLGKI…LYASSKPVMG (298 aa)) is DUF1669. The tract at residues 76-97 (REPPCPPDTLGGAEAGPKGLDS) is disordered. Phosphoserine is present on residues Ser301, Ser327, Ser348, and Ser357. The disordered stretch occupies residues 308–399 (VPPGAAPANG…HDGPPAAVYS (92 aa)). Composition is skewed to low complexity over residues 320 to 332 (SSSS…RTSS) and 348 to 357 (SVSASSGPCS). Residues 358-369 (PAAPHPPPPPRF) show a composition bias toward pro residues.

This sequence belongs to the FAM83 family. Directly interacts (via DUF1669) with casein kinase isoforms CSNK1A1, CSNK1A1L, CSNK1D and CSNK1E. Phosphorylated upon EGFR activation in a breast cancer cell line.

It localises to the cytoplasm. Its function is as follows. Involved in mitochondrial maintenance during adipogenesis. May be acting by playing a role in the maintenance of normal mitochondrial function. This is Protein FAM83A from Homo sapiens (Human).